The chain runs to 303 residues: Acetylglutamate kinase (303 aa).

Substrate is bound by residues 68–69 (GG), Arg90, and Asn194.

The protein belongs to the acetylglutamate kinase family. ArgB subfamily.

It localises to the cytoplasm. It carries out the reaction N-acetyl-L-glutamate + ATP = N-acetyl-L-glutamyl 5-phosphate + ADP. It functions in the pathway amino-acid biosynthesis; L-arginine biosynthesis; N(2)-acetyl-L-ornithine from L-glutamate: step 2/4. Functionally, catalyzes the ATP-dependent phosphorylation of N-acetyl-L-glutamate. This is Acetylglutamate kinase from Psychrobacter arcticus (strain DSM 17307 / VKM B-2377 / 273-4).